The chain runs to 360 residues: Alpha-2-HS-glycoprotein (360 aa).

Positions 1–15 (LVLLLSLAQLWSCHL) are cleaved as a signal peptide. Positions 24–130 (YREHNCDDPE…QFTVLSAKCD (107 aa)) constitute a Cystatin fetuin-A-type 1 domain. 6 cysteine pairs are disulfide-bonded: cysteine 29–cysteine 351, cysteine 86–cysteine 97, cysteine 111–cysteine 129, cysteine 143–cysteine 146, cysteine 205–cysteine 216, and cysteine 227–cysteine 244. The N-linked (GlcNAc...) asparagine glycan is linked to asparagine 96. Position 131 is a phosphoserine (serine 131). The residue at position 132 (threonine 132) is a Phosphothreonine. Serine 135 bears the Phosphoserine mark. Residues 141 to 252 (KLCPDCPLLT…TCTIFPAQPV (112 aa)) form the Cystatin fetuin-A-type 2 domain. The N-linked (GlcNAc...) asparagine glycan is linked to asparagine 153. Residues 260–285 (VAGAAAVEPAPAVDPASPVSPPDGQS) form a disordered region. Phosphothreonine is present on threonine 312. Residues serine 318, serine 321, and serine 323 each carry the phosphoserine modification.

This sequence belongs to the fetuin family. Post-translationally, phosphorylated by FAM20C in the extracellular medium. Bone marrow.

It is found in the secreted. Its function is as follows. A cell adhesion protein that binds immature cells of the granulocyte lineage. This Oryctolagus cuniculus (Rabbit) protein is Alpha-2-HS-glycoprotein (AHSG).